The primary structure comprises 318 residues: tRNA(Ile)-lysidine synthase (318 aa).

Serine 26 to serine 31 serves as a coordination point for ATP.

Belongs to the tRNA(Ile)-lysidine synthase family.

The protein resides in the cytoplasm. The catalysed reaction is cytidine(34) in tRNA(Ile2) + L-lysine + ATP = lysidine(34) in tRNA(Ile2) + AMP + diphosphate + H(+). Ligates lysine onto the cytidine present at position 34 of the AUA codon-specific tRNA(Ile) that contains the anticodon CAU, in an ATP-dependent manner. Cytidine is converted to lysidine, thus changing the amino acid specificity of the tRNA from methionine to isoleucine. The polypeptide is tRNA(Ile)-lysidine synthase (Nocardia farcinica (strain IFM 10152)).